The primary structure comprises 238 residues: Purine nucleoside phosphorylase DeoD-type (238 aa).

H5 serves as a coordination point for a purine D-ribonucleoside. Residues G21, R25, R44, and 88-91 (RIGT) each bind phosphate. Residues 180-182 (DME) and 204-205 (SD) contribute to the a purine D-ribonucleoside site. Residue D205 is the Proton donor of the active site.

The protein belongs to the PNP/UDP phosphorylase family. In terms of assembly, homohexamer; trimer of homodimers.

It carries out the reaction a purine D-ribonucleoside + phosphate = a purine nucleobase + alpha-D-ribose 1-phosphate. The enzyme catalyses a purine 2'-deoxy-D-ribonucleoside + phosphate = a purine nucleobase + 2-deoxy-alpha-D-ribose 1-phosphate. Functionally, catalyzes the reversible phosphorolytic breakdown of the N-glycosidic bond in the beta-(deoxy)ribonucleoside molecules, with the formation of the corresponding free purine bases and pentose-1-phosphate. In Buchnera aphidicola subsp. Baizongia pistaciae (strain Bp), this protein is Purine nucleoside phosphorylase DeoD-type.